Here is a 283-residue protein sequence, read N- to C-terminus: tRNA pseudouridine synthase A (283 aa).

Residue Asp52 is the Nucleophile of the active site. Tyr148 contacts substrate.

This sequence belongs to the tRNA pseudouridine synthase TruA family. As to quaternary structure, homodimer.

It carries out the reaction uridine(38/39/40) in tRNA = pseudouridine(38/39/40) in tRNA. Its function is as follows. Formation of pseudouridine at positions 38, 39 and 40 in the anticodon stem and loop of transfer RNAs. In Orientia tsutsugamushi (strain Ikeda) (Rickettsia tsutsugamushi), this protein is tRNA pseudouridine synthase A.